Reading from the N-terminus, the 303-residue chain is tRNA dimethylallyltransferase 1 (303 aa).

9–16 (GPTASGKT) is a binding site for ATP. 11-16 (TASGKT) lines the substrate pocket. Interaction with substrate tRNA stretches follow at residues 34–37 (DSAL), 158–162 (QRLIR), and 239–244 (RCVGYR).

It belongs to the IPP transferase family. Monomer. Mg(2+) serves as cofactor.

It catalyses the reaction adenosine(37) in tRNA + dimethylallyl diphosphate = N(6)-dimethylallyladenosine(37) in tRNA + diphosphate. In terms of biological role, catalyzes the transfer of a dimethylallyl group onto the adenine at position 37 in tRNAs that read codons beginning with uridine, leading to the formation of N6-(dimethylallyl)adenosine (i(6)A). The protein is tRNA dimethylallyltransferase 1 of Shewanella sediminis (strain HAW-EB3).